The sequence spans 557 residues: Putative glutathione-regulated potassium-efflux system protein KefB (557 aa).

Helical transmembrane passes span 2–22 (LGYL…ISDV), 24–44 (EILH…GLEL), 56–76 (IFGV…GLLM), 84–104 (AAVV…LQLM), 121–141 (VLLF…LLAG), 146–166 (HFDW…LIGG), 176–196 (FIAA…LVLG), 199–219 (LFMD…GVLL), 237–257 (GLLL…GVLY), and 260–280 (LLWV…VLYL). Positions 356–475 (KPQVIVVGFG…AGVTQFSRET (120 aa)) constitute an RCK N-terminal domain.

This sequence belongs to the monovalent cation:proton antiporter 2 (CPA2) transporter (TC 2.A.37) family. KefB subfamily. Interacts with the regulatory subunit KefG.

Its subcellular location is the cell inner membrane. Functionally, pore-forming subunit of a potassium efflux system that confers protection against electrophiles. Catalyzes K(+)/H(+) antiport. This chain is Putative glutathione-regulated potassium-efflux system protein KefB, found in Shigella flexneri.